We begin with the raw amino-acid sequence, 144 residues long: Thyrostimulin alpha-2 subunit (144 aa).

A signal peptide spans 1-41 (MGRRDSGRAVAQRYRGVTRGVTVIACLMVVCACVGLCDATG). Cystine bridges form between Cys-52-Cys-107, Cys-66-Cys-121, Cys-76-Cys-136, and Cys-80-Cys-138.

It belongs to the glycoprotein hormones subunit alpha family. Heterodimer with GPHB5; non-covalently-linked. Expressed by the venom duct.

It localises to the secreted. The polypeptide is Thyrostimulin alpha-2 subunit (Conus victoriae (Queen Victoria cone)).